Here is a 161-residue protein sequence, read N- to C-terminus: Low molecular weight phosphotyrosine protein phosphatase (161 aa).

Cysteine 14 acts as the Nucleophile in catalysis. Catalysis depends on arginine 20, which acts as the Transition state stabilizer. Serine 57 is subject to Phosphoserine. Residue aspartate 133 is the Proton donor of the active site.

The protein belongs to the low molecular weight phosphotyrosine protein phosphatase family.

The protein localises to the cytoplasm. The enzyme catalyses O-phospho-L-tyrosyl-[protein] + H2O = L-tyrosyl-[protein] + phosphate. The catalysed reaction is a phosphate monoester + H2O = an alcohol + phosphate. Its function is as follows. Acts on tyrosine phosphorylated proteins, low-MW aryl phosphates and natural and synthetic acyl phosphates. The polypeptide is Low molecular weight phosphotyrosine protein phosphatase (Saccharomyces cerevisiae (strain ATCC 204508 / S288c) (Baker's yeast)).